The primary structure comprises 1335 residues: Regulatory-associated protein of mTOR (1335 aa).

Phosphoserine is present on residues Ser-44 and Ser-122. Ser-696 is subject to Phosphoserine; by MAPK8. Thr-700 carries O-linked (GlcNAc) threonine glycosylation. Thr-706 bears the Phosphothreonine; by MAPK8 mark. Ser-719 and Ser-721 each carry phosphoserine; by RPS6KA1. Ser-722 is subject to Phosphoserine; by AMPK and RPS6KA1. A Phosphoserine modification is found at Ser-738. Residue Ser-791 is modified to Phosphoserine; by PKA. The residue at position 792 (Ser-792) is a Phosphoserine; by AMPK. Phosphoserine occurs at positions 836 and 855. Positions 850–943 are disordered; sequence VLDTSSLTQS…PEQTADDADD (94 aa). The segment covering 851-866 has biased composition (polar residues); it reads LDTSSLTQSAPASPTN. Ser-859 carries the post-translational modification Phosphoserine; by MTOR. At Ser-863 the chain carries Phosphoserine; by MAPK8, MTOR and NLK. At Thr-865 the chain carries Phosphothreonine. Residues 874-887 are compositionally biased toward low complexity; that stretch reads AGGSPPASSTSSSS. Ser-877 carries the phosphoserine; by TBK1 modification. Glycyl lysine isopeptide (Lys-Gly) (interchain with G-Cter in ubiquitin) cross-links involve residues Lys-932 and Lys-948. Ser-982 bears the Phosphoserine mark. WD repeat units follow at residues 1020–1061, 1065–1106, 1121–1160, 1164–1203, 1209–1249, 1251–1291, and 1299–1335; these read NRNP…DYFH, PRYT…EKNP, TTRGAGMVVDWEQETGLLMSSGDVRIVRIWDTDREMKVQD, GADSCVTSLSCDSHRSLIVAGLGDGSIRVYDRRMALSECR, EHTA…SVNV, QIVK…NNIK, and QRVGAISCLAFHPHWPHLAVGSNDYYISVYSVEKRVR. Lys-1097 is modified (N6-acetyllysine).

The protein belongs to the WD repeat RAPTOR family. Part of the mechanistic target of rapamycin complex 1 (mTORC1) which contains MTOR, MLST8 and RPTOR. mTORC1 associates with AKT1S1/PRAS40, which inhibits its activity. mTORC1 associates with DEPTOR, which regulates its activity. mTORC1 binds to and is inhibited by FKBP12-rapamycin. Forms a complex with MTOR under both leucine-rich and -poor conditions. Interacts with (via TOS motifs) EIF4EBP1 and RPS6KB1; interaction is independent of its association with MTOR. Binds preferentially to poorly or non-phosphorylated forms of EIF4EBP1, and this binding is critical to the ability of MTOR to catalyze phosphorylation. Interacts with ULK1 in a nutrient-dependent manner; the interaction is reduced during starvation. Interacts with GTP-bound form of RagA/RRAGA or RagB/RRAGB and GDP-bound form of RagC/RRAGC or RagD/RRAGD, promoting recruitment of mTORC1 to the lysosomes. Interacts (when phosphorylated by AMPK) with 14-3-3 protein, leading to inhibition of its activity. Interacts with SPAG5; SPAG5 competes with MTOR for RPTOR-binding, resulting in decreased mTORC1 formation. Interacts with WAC; WAC positively regulates MTOR activity by promoting the assembly of the TTT complex composed of TELO2, TTI1 and TTI2 and the RUVBL complex composed of RUVBL1 and RUVBL2 into the TTT-RUVBL complex which leads to the dimerization of the mTORC1 complex and its subsequent activation. Interacts with G3BP1. The complex formed with G3BP1 and SPAG5 is increased by oxidative stress. Interacts with HTR6. Interacts with PIH1D1. Interacts with LARP1. Interacts with BRAT1. Interacts with SIK3. Interacts with SLC38A7; this interaction mediates the recruitment of mTORC1 to the lysosome and its subsequent activation. In terms of assembly, (Microbial infection) Interacts with vaccinia virus protein F17; this interaction dysregulates mTOR. Post-translationally, insulin-stimulated phosphorylation at Ser-863 by MTOR and MAPK8 regulates mTORC1 activity. Phosphorylated at Ser-863 by NLK in response to stress, disrupting the interaction with small GTPases Rag (RagA/RRAGA, RagB/RRAGB, RagC/RRAGC and/or RagD/RRAGD), thereby preventing lysosome recruitment and activation of the mTORC1 complex. Osmotic stress also induces phosphorylation at Ser-696, Thr-706 and Ser-863 by MAPK8. Ser-863 phosphorylation is required for phosphorylation at Ser-855 and Ser-859. In response to nutrient limitation, phosphorylated at Ser-722 and Ser-792 by AMPK; phosphorylation promotes interaction with 14-3-3 proteins, leading to negative regulation of the mTORC1 complex. Phosphorylation at Ser-722 and Ser-792 by AMPK in response to glucose starvation inhibits O-GlcNAcylation by OGT and subsequent activation of mTORC1. In response to growth factors, phosphorylated at Ser-719, Ser-721 and Ser-722 by RPS6KA1, which stimulates mTORC1 activity. Phosphorylation at Ser-791 by PKA downstream of cAMP inhibits the mTORC1 complex. Phosphorylated at Ser-877 by TBK1, leading to negative regulation of the mTORC1 complex. In terms of processing, O-GlcNAcylated by OGT upon glucose sufficiency, promoting interaction with small GTPases Rag (RagA/RRAGA, RagB/RRAGB, RagC/RRAGC and/or RagD/RRAGD) and subsequent recruitment of mTORC1 to lysosomal membranes, leading to activation of the mTORC1 complex. Phosphorylation at Ser-722 and Ser-792 by AMPK in response to glucose starvation inhibits O-GlcNAcylation. Acetylation at Lys-1097 by EP300/p300 in response to leucine metabolite acetyl-coA promotes its activity, leading to activation of the mTORC1 complex. Acetylation is decreased in response to fasting. Post-translationally, ubiquitinated, leading to its degradation by the proteasome. Deubiquitinated by OTUB1 via a non-catalytic mechanism. Ubiquitinated by an E3 ubiquitin ligase complex containing VHL. As to expression, highly expressed in skeletal muscle, and in a lesser extent in brain, lung, small intestine, kidney and placenta. In terms of tissue distribution, widely expressed, with highest levels in nasal mucosa and pituitary and lowest in spleen.

It localises to the lysosome membrane. The protein resides in the cytoplasm. It is found in the cytoplasmic granule. In terms of biological role, component of the mechanistic target of rapamycin complex 1 (mTORC1), an evolutionarily conserved central nutrient sensor that stimulates anabolic reactions and macromolecule biosynthesis to promote cellular biomass generation and growth. In response to nutrients, growth factors or amino acids, mTORC1 is recruited to the lysosome membrane and promotes protein, lipid and nucleotide synthesis by phosphorylating several substrates, such as ribosomal protein S6 kinase (RPS6KB1 and RPS6KB2) and EIF4EBP1 (4E-BP1). In the same time, it inhibits catabolic pathways by phosphorylating the autophagy initiation components ULK1 and ATG13, as well as transcription factor TFEB, a master regulators of lysosomal biogenesis and autophagy. The mTORC1 complex is inhibited in response to starvation and amino acid depletion. Within the mTORC1 complex, RPTOR acts both as a molecular adapter, which (1) mediates recruitment of mTORC1 to lysosomal membranes via interaction with small GTPases Rag (RagA/RRAGA, RagB/RRAGB, RagC/RRAGC and/or RagD/RRAGD), and a (2) substrate-specific adapter, which promotes substrate specificity by binding to TOS motif-containing proteins and direct them towards the active site of the MTOR kinase domain for phosphorylation. mTORC1 complex regulates many cellular processes, such as odontoblast and osteoclast differentiation or neuronal transmission. mTORC1 complex in excitatory neuronal transmission is required for the prosocial behavior induced by the psychoactive substance lysergic acid diethylamide (LSD). The sequence is that of Regulatory-associated protein of mTOR from Homo sapiens (Human).